The primary structure comprises 105 residues: Met repressor (105 aa).

Belongs to the MetJ family. In terms of assembly, homodimer.

It is found in the cytoplasm. Its function is as follows. This regulatory protein, when combined with SAM (S-adenosylmethionine) represses the expression of the methionine regulon and of enzymes involved in SAM synthesis. This is Met repressor from Haemophilus ducreyi (strain 35000HP / ATCC 700724).